The chain runs to 443 residues: Phosphoglucosamine mutase (443 aa).

S102 functions as the Phosphoserine intermediate in the catalytic mechanism. S102, D241, D243, and D245 together coordinate Mg(2+). Position 102 is a phosphoserine (S102).

The protein belongs to the phosphohexose mutase family. It depends on Mg(2+) as a cofactor. In terms of processing, activated by phosphorylation.

The catalysed reaction is alpha-D-glucosamine 1-phosphate = D-glucosamine 6-phosphate. Its function is as follows. Catalyzes the conversion of glucosamine-6-phosphate to glucosamine-1-phosphate. This Polaromonas sp. (strain JS666 / ATCC BAA-500) protein is Phosphoglucosamine mutase.